Consider the following 164-residue polypeptide: HTH-type transcriptional regulator IscR (164 aa).

The region spanning 2-131 (RLTSKGRYAV…GSISLEELVK (130 aa)) is the HTH rrf2-type domain. A DNA-binding region (H-T-H motif) is located at residues 28-51 (LADISERQGISLSYLEQLFSRLRK). 3 residues coordinate [2Fe-2S] cluster: C92, C98, and C104. Residues 140–164 (DRQDSDKRRTPNGRPQETINVNLRA) form a disordered region. Residues 152 to 164 (GRPQETINVNLRA) show a composition bias toward polar residues.

[2Fe-2S] cluster is required as a cofactor.

In terms of biological role, regulates the transcription of several operons and genes involved in the biogenesis of Fe-S clusters and Fe-S-containing proteins. The chain is HTH-type transcriptional regulator IscR from Xenorhabdus nematophila (strain ATCC 19061 / DSM 3370 / CCUG 14189 / LMG 1036 / NCIMB 9965 / AN6).